The primary structure comprises 758 residues: POU domain, class 2, transcription factor 1 (758 aa).

3 stretches are compositionally biased toward polar residues: residues 1–10 (MKLHSSSKIQ), 19–30 (RMNNPSETSKSP), and 275–285 (VQQLPQSQTTP). Disordered regions lie at residues 1 to 43 (MKLH…QTNG), 271 to 296 (AATPVQQLPQSQTTPKRIDTPSLEEP), 377 to 398 (TNQSVLNSPGHGMEGLNRRRKK), 450 to 472 (EKRINPPSSGGSSSSPIKSLFSS), and 534 to 573 (SVLTSPSLSSSPSATAASSEASTAGETSTTQTTSTPMTSS). Positions 294-368 (EEPSDLEELE…LLEKWLNDAE (75 aa)) constitute a POU-specific domain. Positions 395–454 (RRKKRTSIETNIRVALEKSFLENQKPTSEEITMIADQLNMEKEVIRVWFCNRRQKEKRIN) form a DNA-binding region, homeobox. Low complexity predominate over residues 455-472 (PPSSGGSSSSPIKSLFSS).

The protein belongs to the POU transcription factor family. Class-2 subfamily. Expressed in oocytes (at protein level). Expressed in the tadpole brain (at protein level).

It is found in the cytoplasm. The protein resides in the nucleus. Transcription factor that binds to the octamer motif (5'-ATTTGCAT-3') and activates the promoters of the genes of some small nuclear RNAs (snRNA) and histone H2B. In vitro does not bind to variant octamer sequences, such as the H2B octamer 5'-GTTTGCAT-3', although binding has been observed in vivo during early embryogenesis, suggesting that interactions between pou2f1 and other factors might be required for octamer-dependent H2B transcription. Acts downstream of Notch signaling during radial glia formation. May be important for gastrulation, possibly through the regulation of an FGF-type signaling pathway. This chain is POU domain, class 2, transcription factor 1 (pou2f1), found in Xenopus laevis (African clawed frog).